The chain runs to 49 residues: Metallothionein (49 aa).

A beta region spans residues 1 to 16 (SCAGSCKCKNCRCRSC). Residues cysteine 2, cysteine 6, cysteine 8, cysteine 11, cysteine 13, cysteine 16, cysteine 20, cysteine 21, cysteine 23, cysteine 24, cysteine 28, cysteine 31, cysteine 35, cysteine 37, cysteine 45, cysteine 47, and cysteine 48 each coordinate a divalent metal cation. The alpha stretch occupies residues 17-49 (RKSCCSCCPAGCNNCAKGCVCKEPASSKCSCCH).

Belongs to the metallothionein superfamily. Type 1 family.

Its function is as follows. Metallothioneins have a high content of cysteine residues that bind various heavy metals. The polypeptide is Metallothionein (Phasianus colchicus colchicus (Black-necked pheasant)).